Here is a 276-residue protein sequence, read N- to C-terminus: 2,3,4,5-tetrahydropyridine-2,6-dicarboxylate N-succinyltransferase (276 aa).

Substrate is bound by residues Arg-107 and Asp-144.

Belongs to the transferase hexapeptide repeat family. In terms of assembly, homotrimer.

It localises to the cytoplasm. It carries out the reaction (S)-2,3,4,5-tetrahydrodipicolinate + succinyl-CoA + H2O = (S)-2-succinylamino-6-oxoheptanedioate + CoA. The protein operates within amino-acid biosynthesis; L-lysine biosynthesis via DAP pathway; LL-2,6-diaminopimelate from (S)-tetrahydrodipicolinate (succinylase route): step 1/3. In Gluconobacter oxydans (strain 621H) (Gluconobacter suboxydans), this protein is 2,3,4,5-tetrahydropyridine-2,6-dicarboxylate N-succinyltransferase.